Reading from the N-terminus, the 487-residue chain is L-tartrate/succinate antiporter (487 aa).

Residues methionine 1 to arginine 9 lie on the Periplasmic side of the membrane. The helical transmembrane segment at tyrosine 10–glutamate 30 threads the bilayer. The Cytoplasmic portion of the chain corresponds to asparagine 31 to histidine 32. 2 consecutive transmembrane segments (helical) span residues threonine 33–proline 53 and glycine 54–phenylalanine 74. The Cytoplasmic segment spans residues serine 75–serine 92. A helical membrane pass occupies residues tryptophan 93–glycine 113. Residues threonine 114–arginine 136 are Periplasmic-facing. The helical transmembrane segment at threonine 137–serine 157 threads the bilayer. The Cytoplasmic segment spans residues asparagine 158–serine 188. A helical transmembrane segment spans residues isoleucine 189–leucine 209. The Periplasmic portion of the chain corresponds to threonine 210 to tryptophan 235. Residues phenylalanine 236–valine 256 traverse the membrane as a helical segment. Residues leucine 257–glycine 291 lie on the Cytoplasmic side of the membrane. Helical transmembrane passes span leucine 292–valine 312 and glycine 313–serine 333. Over asparagine 334 to asparagine 339 the chain is Cytoplasmic. A helical membrane pass occupies residues valine 340–isoleucine 360. Topologically, residues serine 361–glycine 369 are periplasmic. Residues serine 370–leucine 390 traverse the membrane as a helical segment. Topologically, residues arginine 391–tyrosine 392 are cytoplasmic. The chain crosses the membrane as a helical span at residues phenylalanine 393–leucine 413. At alanine 414 to glutamate 417 the chain is on the periplasmic side. The helical transmembrane segment at isoleucine 418–threonine 438 threads the bilayer. The Cytoplasmic segment spans residues proline 439–alanine 464. The chain crosses the membrane as a helical span at residues isoleucine 465–valine 485. The Periplasmic segment spans residues leucine 486–leucine 487.

This sequence belongs to the SLC13A/DASS transporter (TC 2.A.47) family. DIT1 subfamily.

The protein localises to the cell inner membrane. It catalyses the reaction (2R,3R)-tartrate(out) + succinate(in) = (2R,3R)-tartrate(in) + succinate(out). In terms of biological role, catalyzes the uptake of tartrate in exchange for intracellular succinate. Essential for anaerobic L-tartrate fermentation. The sequence is that of L-tartrate/succinate antiporter from Escherichia coli (strain K12).